The chain runs to 300 residues: 2-dehydropantoate 2-reductase (300 aa).

Residues 7-12, lysine 74, asparagine 99, and alanine 123 contribute to the NADP(+) site; that span reads GAGAIG. Catalysis depends on lysine 179, which acts as the Proton donor. Residues lysine 179, asparagine 183, asparagine 187, asparagine 197, and 246–249 contribute to the substrate site; that span reads NYNS. Position 261 (glutamate 261) interacts with NADP(+).

This sequence belongs to the ketopantoate reductase family.

The protein localises to the cytoplasm. The enzyme catalyses (R)-pantoate + NAD(+) = 2-dehydropantoate + NADH + H(+). It catalyses the reaction (R)-pantoate + NADP(+) = 2-dehydropantoate + NADPH + H(+). It functions in the pathway cofactor biosynthesis; coenzyme A biosynthesis. Functionally, catalyzes the NAD(P)H-dependent reduction of ketopantoate into pantoic acid. The sequence is that of 2-dehydropantoate 2-reductase (apbA) from Pyrococcus abyssi (strain GE5 / Orsay).